The chain runs to 353 residues: (3aS,4S,5R,7aS)-5-hydroxy-7a-methyl-1-oxo-octahydro-1H-indene-4-carboxyl-CoA dehydrogenase (353 aa).

FMN contacts are provided by residues 22 to 24 (GMG), 171 to 173 (AGG), and 194 to 195 (GT).

This sequence belongs to the nitronate monooxygenase family.

The enzyme catalyses (3aS,4S,5R,7aS)-5-hydroxy-7a-methyl-1-oxo-octahydro-1H-indene-4-carboxyl-CoA + NAD(+) = (5R,7aS)-5-hydroxy-7a-methyl-1-oxo-2,3,5,6,7,7a-hexahydro-1H-indene-carboxyl-CoA + NADH + H(+). Its pathway is steroid metabolism; cholesterol degradation. Its function is as follows. Involved in the final steps of cholesterol and steroid degradation. Probably catalyzes the introduction of a double bound into the C ring of 5OH-HIC-CoA, leading to the formation of (5R,7aS)-5-hydroxy-7a-methyl-1-oxo-3,5,6,7-tetrahydro-2H-indene-4-carboxyl-CoA. The chain is (3aS,4S,5R,7aS)-5-hydroxy-7a-methyl-1-oxo-octahydro-1H-indene-4-carboxyl-CoA dehydrogenase from Rhodococcus jostii (strain RHA1).